A 222-amino-acid chain; its full sequence is Ras-related protein Rab-21 (222 aa).

N-acetylalanine is present on Ala2. Positions 25, 28, 29, 30, 31, 42, 43, 45, 47, and 48 each coordinate GTP. Thr30 serves as a coordination point for Mg(2+). The Switch 1 motif lies at 40-53 (KFNDKHITTLQASF). Mg(2+) is bound by residues Thr48 and Asp71. Positions 73–91 (AGQERFHALGPIYYRDSNG) match the Switch 2 motif. The GTP site is built by Gly74, Asn129, Lys130, Asp132, Ala160, and Lys161. S-geranylgeranyl cysteine attachment occurs at residues Cys218 and Cys219. A Cysteine methyl ester modification is found at Cys219. The propeptide at 220–222 (SSG) is removed in mature form.

The protein belongs to the small GTPase superfamily. Rab family. Interacts with the cytoplasmic tail of integrins ITGA1, ITGA2, ITGA5, ITGA6, ITGA11 and ITGB1; this interaction is dependent upon its GDP/GTP cycle. Interacts with RABGEF1 (via VPS9 domain). Interacts with ANKRD27. Interacts (in GTP-bound form) with VAMP8 in response to starvation; the interaction probably regulates VAMP8 endolysosomal trafficking. Interacts (active GTP-bound form) with TMED10; the interaction is indirect and regulates TMED10 abundance and localization at the Golgi. The cofactor is Mg(2+).

The protein localises to the endoplasmic reticulum membrane. The protein resides in the golgi apparatus. It is found in the trans-Golgi network. It localises to the golgi apparatus membrane. Its subcellular location is the early endosome membrane. The protein localises to the cytoplasmic vesicle membrane. The protein resides in the cleavage furrow. It is found in the cell projection. It localises to the neuron projection. The enzyme catalyses GTP + H2O = GDP + phosphate + H(+). With respect to regulation, regulated by guanine nucleotide exchange factors (GEFs) including ANKRD27 and RABGEF1, which promote the exchange of bound GDP for free GTP. Regulated by GTPase activating proteins (GAPs) which increase the GTP hydrolysis activity. Inhibited by GDP dissociation inhibitors (GDIs). Functionally, the small GTPases Rab are key regulators of intracellular membrane trafficking, from the formation of transport vesicles to their fusion with membranes. Rabs cycle between an inactive GDP-bound form and an active GTP-bound form that is able to recruit to membranes different sets of downstream effectors directly responsible for vesicle formation, movement, tethering and fusion. RAB21 is involved in membrane trafficking control. Regulates integrin internalization and recycling, but does not influence the traffic of endosomally translocated receptors in general. As a result, may regulate cell adhesion and migration. During the mitosis of adherent cells, controls the endosomal trafficking of integrins which is required for the successful completion of cytokinesis. Involved in neurite growth. Following SBF2/MTMT13-mediated activation in response to starvation-induced autophagy, binds to and regulates SNARE protein VAMP8 endolysosomal transport required for SNARE-mediated autophagosome-lysosome fusion. Modulates protein levels of the cargo receptors TMED2 and TMED10, and required for appropriate Golgi localization of TMED10. In Bos taurus (Bovine), this protein is Ras-related protein Rab-21 (RAB21).